The sequence spans 492 residues: MSQKEVADFGLIGLAVMGQNLILNGADKGFTVCCYNRTTSRVDEFLANEAKGKSIVGAHSLEEFVSKLKKPRVCILLVKAGKPVDYLIEGLAPLLEKGDIIVDGGNSHYPDTTRRCEELAKKGILFVGSGVSGGEEGARYGPSLMPGGNPAAWPRIKPIFQTLAAKAGNNEPCCDWVGEQGAGHYVKMVHNGIEYGDMQLICETYDIMKRGLGMSCDEIADVFEKWNTGKLDSFLIEITRDVLRYKADDGKPLVEKILDAAGQKGTGKWTAQNALEMGTPVSLITEAVFARCLSSLKSERVRASKKLTGPNTKFTGDKKQLIDDLEDALYASKIISYAQGFMLMREAAKEYGWKLNNAGIALMWRGGCIIRSVFLKDITEAFREDPNLESILFHPFFTNGVEKAQAGWRRVVAQAAMLGIPVPATSTGLSFYDGYRSAVLPANLLQAQRDYFGAHTFRVLPEAADKSLPADKDIHINWTGHGGNISATTYDA.

NADP(+) contacts are provided by residues 13–18, 36–38, 78–80, and Asn-106; these read GLAVMG, NRT, and VKA. A substrate-binding site is contributed by Asn-106. Position 107 is a phosphoserine (Ser-107). Residue 132-134 participates in substrate binding; that stretch reads SGG. Residue Lys-187 is the Proton acceptor of the active site. A substrate-binding site is contributed by 190–191; the sequence is HN. The Proton donor role is filled by Glu-194. Tyr-195 is a substrate binding site. At Ser-215 the chain carries Phosphoserine. Substrate-binding residues include Lys-264, Arg-291, Arg-449, and His-455.

The protein belongs to the 6-phosphogluconate dehydrogenase family. As to quaternary structure, homodimer.

It carries out the reaction 6-phospho-D-gluconate + NADP(+) = D-ribulose 5-phosphate + CO2 + NADPH. It participates in carbohydrate degradation; pentose phosphate pathway; D-ribulose 5-phosphate from D-glucose 6-phosphate (oxidative stage): step 3/3. In terms of biological role, catalyzes the oxidative decarboxylation of 6-phosphogluconate to ribulose 5-phosphate and CO(2), with concomitant reduction of NADP to NADPH. In Schizosaccharomyces pombe (strain 972 / ATCC 24843) (Fission yeast), this protein is 6-phosphogluconate dehydrogenase, decarboxylating.